The chain runs to 524 residues: Bifunctional purine biosynthesis protein PurH (524 aa).

The MGS-like domain occupies methionine 1–valine 145.

This sequence belongs to the PurH family.

The enzyme catalyses (6R)-10-formyltetrahydrofolate + 5-amino-1-(5-phospho-beta-D-ribosyl)imidazole-4-carboxamide = 5-formamido-1-(5-phospho-D-ribosyl)imidazole-4-carboxamide + (6S)-5,6,7,8-tetrahydrofolate. The catalysed reaction is IMP + H2O = 5-formamido-1-(5-phospho-D-ribosyl)imidazole-4-carboxamide. The protein operates within purine metabolism; IMP biosynthesis via de novo pathway; 5-formamido-1-(5-phospho-D-ribosyl)imidazole-4-carboxamide from 5-amino-1-(5-phospho-D-ribosyl)imidazole-4-carboxamide (10-formyl THF route): step 1/1. It functions in the pathway purine metabolism; IMP biosynthesis via de novo pathway; IMP from 5-formamido-1-(5-phospho-D-ribosyl)imidazole-4-carboxamide: step 1/1. This is Bifunctional purine biosynthesis protein PurH from Ralstonia pickettii (strain 12J).